We begin with the raw amino-acid sequence, 240 residues long: Probable Ni/Fe-hydrogenase B-type cytochrome subunit (240 aa).

4 helical membrane-spanning segments follow: residues 31–51, 75–95, 142–163, and 196–213; these read LWHWVTALSIVVLGVTGYFIG, FAAGYVLAIGFLGRVYWAFVG, LAMFCFFVVGAVFMSVTGFALY, and LGMWYLVVFVMVHVYLAV.

The protein belongs to the HupC/HyaC/HydC family.

It is found in the cell membrane. Probable b-type cytochrome. The protein is Probable Ni/Fe-hydrogenase B-type cytochrome subunit (hoxZ) of Azotobacter vinelandii.